Here is a 400-residue protein sequence, read N- to C-terminus: Large envelope protein (400 aa).

Met-1 is subject to N-acetylmethionine. The interval 1-20 is disordered; the sequence is MGGWSAKPRKGMGTNLSVPN. Residue Gly-2 is the site of N-myristoyl glycine; by host attachment. The tract at residues 2–119 is pre-S1; the sequence is GGWSAKPRKG…PPLRDSHPQA (118 aa). A pre-S region spans residues 2–174; the sequence is GGWSAKPRKG…SSRTGDPALN (173 aa). The Virion surface; in external conformation segment spans residues 2-181; it reads GGWSAKPRKG…ALNMENITSG (180 aa). The Intravirion; in internal conformation segment spans residues 2 to 253; it reads GGWSAKPRKG…PGYRWMCLRR (252 aa). N-linked (GlcNAc...) asparagine glycosylation is present at Trp-4. Residues 120-174 are pre-S2; sequence MQWNSTAFQQALQDPRVRGLFFPAGGSSSGTVNPAPNIASHISSISSRTGDPALN. A helical transmembrane segment spans residues 182–202; sequence FLGPLLVLQAGFFLLTRILTI. The Intravirion; in external conformation segment spans residues 203-253; that stretch reads PQSLDSWWTSLNFLGGSPVCLGQNSQSPTSNHSPTSCPPICPGYRWMCLRR. Residues 254–274 form a helical membrane-spanning segment; that stretch reads FIIFLFILLLCLIFLLVLLDY. Topologically, residues 275–348 are virion surface; it reads QGMLPVCPLI…WASVRFSWLS (74 aa). Asn-320 is a glycosylation site (N-linked (GlcNAc...) asparagine; by host). The chain crosses the membrane as a helical span at residues 349–369; it reads LLVPFVQWFVGLSPTVWLSVI. The Intravirion portion of the chain corresponds to 370-375; sequence WMMWYW. Residues 376 to 398 traverse the membrane as a helical segment; sequence GPSLYNILSPFIPLLPIFFCLWV. The Virion surface portion of the chain corresponds to 399–400; it reads YI.

The protein belongs to the orthohepadnavirus major surface antigen family. In its internal form (Li-HBsAg), interacts with the capsid protein and with the isoform S. Interacts with host chaperone CANX. As to quaternary structure, associates with host chaperone CANX through its pre-S2 N glycan; this association may be essential for isoform M proper secretion. In terms of assembly, interacts with isoform L. Interacts with the antigens of satellite virus HDV (HDVAgs); this interaction is required for encapsidation of HDV genomic RNA. Post-translationally, isoform M is N-terminally acetylated by host at a ratio of 90%, and N-glycosylated by host at the pre-S2 region. In terms of processing, myristoylated.

The protein localises to the virion membrane. Its function is as follows. The large envelope protein exists in two topological conformations, one which is termed 'external' or Le-HBsAg and the other 'internal' or Li-HBsAg. In its external conformation the protein attaches the virus to cell receptors and thereby initiating infection. This interaction determines the species specificity and liver tropism. This attachment induces virion internalization predominantly through caveolin-mediated endocytosis. The large envelope protein also assures fusion between virion membrane and endosomal membrane. In its internal conformation the protein plays a role in virion morphogenesis and mediates the contact with the nucleocapsid like a matrix protein. The middle envelope protein plays an important role in the budding of the virion. It is involved in the induction of budding in a nucleocapsid independent way. In this process the majority of envelope proteins bud to form subviral lipoprotein particles of 22 nm of diameter that do not contain a nucleocapsid. The chain is Large envelope protein from Hepatitis B virus genotype A1 subtype adw2 (isolate Southern-Africa/Cai) (HBV-A).